Here is a 147-residue protein sequence, read N- to C-terminus: Vasopressin-neurophysin 2-copeptin (147 aa).

Residues Cys1 and Cys6 are joined by a disulfide bond. Gly9 is modified (glycine amide). 7 disulfides stabilise this stretch: Cys22–Cys66, Cys25–Cys39, Cys33–Cys56, Cys40–Cys46, Cys73–Cys85, Cys79–Cys97, and Cys86–Cys91. Residue Asn114 is glycosylated (N-linked (GlcNAc...) asparagine).

It belongs to the vasopressin/oxytocin family. Interacts with vasopressin receptors V1bR/AVPR1B (Ki=85 pM), V1aR/AVPR1A (Ki=0.6 nM) and V2R/AVPR2 (Ki=4.9 nM). Interacts with oxytocin receptor (OXTR) (Ki=110 nM).

The protein resides in the secreted. Its function is as follows. Neurophysin 2 specifically binds vasopressin. Vasopressin has a direct antidiuretic action on the kidney, it also causes vasoconstriction of the peripheral vessels. Acts by binding to vasopressin receptors (V1bR/AVPR1B, V1aR/AVPR1A, and V2R/AVPR2). This is Vasopressin-neurophysin 2-copeptin (AVP) from Ovis aries (Sheep).